We begin with the raw amino-acid sequence, 538 residues long: Aldehyde dehydrogenase family 2 member B4, mitochondrial (538 aa).

The N-terminal 38 residues, 1–38 (MAARRVSSLLSRSFSASSPLLFRSQGRNCYNGGILRRF), are a transit peptide targeting the mitochondrion. 282–287 (GSTDTG) lines the NAD(+) pocket. Catalysis depends on E305, which acts as the Proton acceptor. C339 serves as the catalytic Nucleophile.

It belongs to the aldehyde dehydrogenase family. As to quaternary structure, homotetramer.

The protein resides in the mitochondrion matrix. The enzyme catalyses an aldehyde + NAD(+) + H2O = a carboxylate + NADH + 2 H(+). In terms of biological role, possesses activity on acetaldehyde and glycolaldehyde in vitro. The chain is Aldehyde dehydrogenase family 2 member B4, mitochondrial (ALDH2B4) from Arabidopsis thaliana (Mouse-ear cress).